Consider the following 267-residue polypeptide: Pre-protein VI (267 aa).

Residues 1–33 (MEDINFASLAPRHGSRPFMGTWNEIGTSQLNGG) constitute a propeptide that is removed on maturation. The interval 34-54 (AFSWSSLWSGIKNFGSSIKSF) is amphipathic alpha-helix essential for membrane lytic activity. Residues 36 to 53 (SWSSLWSGIKNFGSSIKS) are involved in endosomal membrane lysis. Residues 48-74 (GSSIKSFGNKAWNSNTGQMLRDKLKDQ) are interaction with hexon protein. The Nuclear export signal signature appears at 67–76 (LRDKLKDQNF). Disordered regions lie at residues 107–184 (LENS…PMTK) and 199–230 (KPVT…PTAP). Composition is skewed to basic and acidic residues over residues 123–135 (PKVE…EKLP) and 146–155 (KGEKRPRPDL). A Nuclear localization signal motif is present at residues 149-153 (KRPRP). The PPXY motif signature appears at 166–169 (PPSY). Residues 205–217 (LPPPVPTVPPMPA) show a composition bias toward pro residues. Residues 218-230 (PTLGTAVSRPTAP) show a composition bias toward low complexity. The short motif at 248–259 (STLNSIVGLGVK) is the Nuclear export signal element. Positions 250 to 256 (LNSIVGL) are interaction with hexon protein. Positions 257–267 (GVKSLKRRRCY) are binds to importin alpha/beta, involved in hexon nuclear import. The Nuclear localization signal signature appears at 262 to 265 (KRRR).

It belongs to the adenoviridae protein VI family. As to quaternary structure, interacts with hexon protein; this interaction allows nuclear import of hexon trimers and possibly pre-capsid assembly. Interacts (via C-terminal NLS) with importin alpha/beta. In terms of assembly, interacts (via PPxY motif) with host NEDD4 ubiquitine ligase; this interaction might play a role in virus intracellular transport during entry. Part of a complex composed of the core-capsid bridging protein, the endosome lysis protein VI and the hexon-linking protein VIII; these interactions bridge the virus core to the capsid. Interacts with peripentonal hexons; this interaction stabilizes the capsid by gluing two peripentonal hexons together and joining them with an adjacent group-of-nine hexon. Heterodimer with the viral protease; disulfide-linked. Interacts with the viral protease. Post-translationally, ubiquitinated by Nedd4 following partial capsid disassembly; which might play a role in intracellular virus movement during entry. Contains the major nuclear import and export signals. Proteolytically removed during virion maturation. The processing of the C-terminus turns the precursor into a mature viral structural protein and abrogates its ability to promote hexon import and act as a potential chaperone protein.

Its subcellular location is the host nucleus. It is found in the host cytoplasm. The protein resides in the virion. Functionally, during virus assembly, promotes hexon trimers nuclear import through nuclear pore complexes via an importin alpha/beta-dependent mechanism. By analogy to herpesviruses capsid assembly, might act as a chaperone to promote the formation of the icosahedral capsid. In terms of biological role, structural component of the virion that provides increased stability to the particle shell through its interaction with the core-capsid bridging protein and the hexon-linking protein VIII. Fibers shedding during virus entry into host cell allows the endosome lysis protein to be exposed as a membrane-lytic peptide. Exhibits pH-independent membrane fragmentation activity and probably mediates viral rapid escape from host endosome via organellar membrane lysis. It is not clear if it then remains partially associated with the capsid and involved in the intracellular microtubule-dependent transport of capsid to the nucleus, or if it is lost during endosomal penetration. Cofactor that activates the viral protease. Binds to viral protease in a 1:1 ratio. This chain is Pre-protein VI, found in Homo sapiens (Human).